Here is a 247-residue protein sequence, read N- to C-terminus: Ribosomal RNA large subunit methyltransferase E (247 aa).

Residues Met-1–Ala-21 form a disordered region. Over residues Ser-8–Pro-17 the composition is skewed to basic and acidic residues. Residues Gly-80, Trp-82, Asp-108, Asp-124, and Asp-153 each coordinate S-adenosyl-L-methionine. The Proton acceptor role is filled by Lys-193.

Belongs to the class I-like SAM-binding methyltransferase superfamily. RNA methyltransferase RlmE family.

Its subcellular location is the cytoplasm. The enzyme catalyses uridine(2552) in 23S rRNA + S-adenosyl-L-methionine = 2'-O-methyluridine(2552) in 23S rRNA + S-adenosyl-L-homocysteine + H(+). In terms of biological role, specifically methylates the uridine in position 2552 of 23S rRNA at the 2'-O position of the ribose in the fully assembled 50S ribosomal subunit. This is Ribosomal RNA large subunit methyltransferase E from Polaromonas sp. (strain JS666 / ATCC BAA-500).